Consider the following 399-residue polypeptide: Odorant receptor 42b (399 aa).

The Cytoplasmic segment spans residues 1 to 45 (MVFELIRPAPLTEQKRSRDGCIYLYRAMKFIGWLPPKQGVLRYVY). A helical membrane pass occupies residues 46-66 (LTWTLMTFVWCTTYLPLGFLG). Topologically, residues 67–83 (SYMTQIKSFSPGEFLTS) are extracellular. The helical transmembrane segment at 84–104 (LQVCINAYGSSVKVAITYSML) threads the bilayer. At 105-140 (WRLIKAKNILDQLDLRCTAMEEREKIHLVVARSNHA) the chain is on the cytoplasmic side. A helical transmembrane segment spans residues 141 to 161 (FLIFTFVYCGYAGSTYLSSVL). The Extracellular portion of the chain corresponds to 162 to 178 (SGRPPWQLYNPFIDWHD). A helical membrane pass occupies residues 179-199 (GTLKLWVASTLEYMVMSGAVL). The Cytoplasmic portion of the chain corresponds to 200–268 (QDQLSDSYPL…AIIKPVIQGT (69 aa)). The chain crosses the membrane as a helical span at residues 269 to 289 (IFTQFLLIGLVLGFTLINVFF). Residues 290–292 (FSD) are Extracellular-facing. Residues 293 to 313 (IWTGIASFMFVITILLQTFPF) traverse the membrane as a helical segment. Topologically, residues 314–356 (CYTCNLIMEDCESLTHAIFQSNWVDASRRYKTTLLYFLQNVQQ) are cytoplasmic. The helical transmembrane segment at 357–377 (PIVFIAGGIFQISMSSNISVA) threads the bilayer. Over 378-399 (KFAFSVITITKQMNIADKFKTD) the chain is Extracellular.

Belongs to the insect chemoreceptor superfamily. Heteromeric odorant receptor channel (TC 1.A.69) family. Or2a subfamily. As to quaternary structure, interacts with Orco. Complexes exist early in the endomembrane system in olfactory sensory neurons (OSNs), coupling these complexes to the conserved ciliary trafficking pathway. As to expression, expressed in olfactory sensory neurons in the antenna.

The protein resides in the cell membrane. Functionally, odorant receptor which mediates acceptance or avoidance behavior, depending on its substrates. The odorant receptor repertoire encodes a large collection of odor stimuli that vary widely in identity, intensity, and duration. May form a complex with Orco to form odorant-sensing units, providing sensitive and prolonged odorant signaling and calcium permeability. Involved in the behavioral responses to ethyl acetate and pentyl acetate. The sequence is that of Odorant receptor 42b (Or42b) from Drosophila melanogaster (Fruit fly).